Consider the following 92-residue polypeptide: MTFTKSVDQTTILQGDRSKLKDLLRLRLNACGWSDQVRLLCREAIKEQDSINCDALVQQVTPKARALIPDTVKKELLQKIKTILVQQEGIDI.

The protein belongs to the ENY2 family. Component of the nuclear pore complex (NPC)-associated TREX-2 complex (transcription and export complex 2). Component of the SAGA transcription coactivator-HAT complex. Within the SAGA complex, participates in a subcomplex of SAGA called the DUB module (deubiquitination module).

It localises to the nucleus. The protein localises to the nucleoplasm. Its function is as follows. Involved in mRNA export coupled transcription activation by association with both the TREX-2 and the SAGA complexes. The transcription regulatory histone acetylation (HAT) complex SAGA is a multiprotein complex that activates transcription by remodeling chromatin and mediating histone acetylation and deubiquitination. Within the SAGA complex, participates in a subcomplex that specifically deubiquitinates histones. The SAGA complex is recruited to specific gene promoters by activators, where it is required for transcription. The TREX-2 complex functions in docking export-competent ribonucleoprotein particles (mRNPs) to the nuclear entrance of the nuclear pore complex (nuclear basket). TREX-2 participates in mRNA export and accurate chromatin positioning in the nucleus by tethering genes to the nuclear periphery. The sequence is that of Enhancer of yellow 2 transcription factor from Aedes aegypti (Yellowfever mosquito).